Here is a 287-residue protein sequence, read N- to C-terminus: ATP synthase gamma chain (287 aa).

Belongs to the ATPase gamma chain family. In terms of assembly, F-type ATPases have 2 components, CF(1) - the catalytic core - and CF(0) - the membrane proton channel. CF(1) has five subunits: alpha(3), beta(3), gamma(1), delta(1), epsilon(1). CF(0) has three main subunits: a, b and c.

Its subcellular location is the cell inner membrane. Its function is as follows. Produces ATP from ADP in the presence of a proton gradient across the membrane. The gamma chain is believed to be important in regulating ATPase activity and the flow of protons through the CF(0) complex. The polypeptide is ATP synthase gamma chain (Enterobacter sp. (strain 638)).